The primary structure comprises 122 residues: Large ribosomal subunit protein uL14 (122 aa).

Belongs to the universal ribosomal protein uL14 family. Part of the 50S ribosomal subunit. Forms a cluster with proteins L3 and L19. In the 70S ribosome, L14 and L19 interact and together make contacts with the 16S rRNA in bridges B5 and B8.

In terms of biological role, binds to 23S rRNA. Forms part of two intersubunit bridges in the 70S ribosome. This is Large ribosomal subunit protein uL14 from Rhizobium etli (strain CIAT 652).